The following is a 123-amino-acid chain: Large ribosomal subunit protein uL14 (123 aa).

It belongs to the universal ribosomal protein uL14 family. Part of the 50S ribosomal subunit. Forms a cluster with proteins L3 and L19. In the 70S ribosome, L14 and L19 interact and together make contacts with the 16S rRNA in bridges B5 and B8.

In terms of biological role, binds to 23S rRNA. Forms part of two intersubunit bridges in the 70S ribosome. The polypeptide is Large ribosomal subunit protein uL14 (Aliivibrio fischeri (strain ATCC 700601 / ES114) (Vibrio fischeri)).